Consider the following 411-residue polypeptide: Putative competence-damage inducible protein (411 aa).

It belongs to the CinA family.

This chain is Putative competence-damage inducible protein, found in Caldicellulosiruptor saccharolyticus (strain ATCC 43494 / DSM 8903 / Tp8T 6331).